The following is a 313-amino-acid chain: tRNA dimethylallyltransferase (313 aa).

11 to 18 (GPTAAGKS) contacts ATP. 13–18 (TAAGKS) provides a ligand contact to substrate. Interaction with substrate tRNA regions lie at residues 36 to 39 (DSAT), 160 to 164 (QRIQR), and 244 to 249 (RCVGYR).

This sequence belongs to the IPP transferase family. As to quaternary structure, monomer. Mg(2+) serves as cofactor.

The catalysed reaction is adenosine(37) in tRNA + dimethylallyl diphosphate = N(6)-dimethylallyladenosine(37) in tRNA + diphosphate. Its function is as follows. Catalyzes the transfer of a dimethylallyl group onto the adenine at position 37 in tRNAs that read codons beginning with uridine, leading to the formation of N6-(dimethylallyl)adenosine (i(6)A). This Bordetella parapertussis (strain 12822 / ATCC BAA-587 / NCTC 13253) protein is tRNA dimethylallyltransferase.